The following is a 210-amino-acid chain: Ion-translocating oxidoreductase complex subunit G (210 aa).

The chain crosses the membrane as a helical span at residues 9–29 (SLVLALFAIAATALVTITYAL). Threonine 176 carries the post-translational modification FMN phosphoryl threonine.

Belongs to the RnfG family. The complex is composed of six subunits: RnfA, RnfB, RnfC, RnfD, RnfE and RnfG. The cofactor is FMN.

The protein resides in the cell inner membrane. Its function is as follows. Part of a membrane-bound complex that couples electron transfer with translocation of ions across the membrane. This chain is Ion-translocating oxidoreductase complex subunit G, found in Aliivibrio fischeri (strain MJ11) (Vibrio fischeri).